The chain runs to 987 residues: Ephrin type-B receptor 2 (987 aa).

Residues M1 to A19 form the signal peptide. Residues V20–L544 are Extracellular-facing. The Eph LBD domain maps to E21–Q203. Intrachain disulfides connect C63-C185 and C98-C108. Residues N266, N337, N429, N478, and N483 are each glycosylated (N-linked (GlcNAc...) asparagine). Fibronectin type-III domains follow at residues I325–A435 and A436–E531. The chain crosses the membrane as a helical span at residues I545–V565. The Cytoplasmic segment spans residues C566–V987. In terms of domain architecture, Protein kinase spans V622 to I885. ATP is bound by residues I628–V636 and K654. D747 acts as the Proton acceptor in catalysis. K892 participates in a covalent cross-link: Glycyl lysine isopeptide (Lys-Gly) (interchain with G-Cter in ubiquitin). The SAM domain occupies T914–Q978. A PDZ-binding motif is present at residues V985–V987.

This sequence belongs to the protein kinase superfamily. Tyr protein kinase family. Ephrin receptor subfamily. As to quaternary structure, heterotetramer upon binding of the ligand. The heterotetramer is composed of an ephrin dimer and a receptor dimer. Oligomerization is probably required to induce biological responses. Ligand binding induces cleavage by matrix metalloproteinases (MMPs) such as MMP7/MMP9, producing an EphB2/N-terminal fragment (NTF) and a C-terminal long fragment (EphB2-LF). EphB2-LF is further cleaved by MMPs, producing EphB2/CTF1 which is further cleaved by the PS1/gamma-secretase producing EphB2/CTF2. In terms of processing, polyubiquitinated; ligand binding stimulates ubiquitination. Ubiquitinated by RNF186 at Lys-892, mainly through 'Lys-27'-linked polyubiquitin chains.

It localises to the cell membrane. It is found in the cell projection. The protein localises to the axon. The protein resides in the dendrite. It catalyses the reaction L-tyrosyl-[protein] + ATP = O-phospho-L-tyrosyl-[protein] + ADP + H(+). Receptor tyrosine kinase which binds promiscuously transmembrane ephrin-B family ligands residing on adjacent cells, leading to contact-dependent bidirectional signaling into neighboring cells. The signaling pathway downstream of the receptor is referred to as forward signaling while the signaling pathway downstream of the ephrin ligand is referred to as reverse signaling. Functions in axon guidance during development. In addition to axon guidance, also regulates dendritic spines development and maturation and stimulates the formation of excitatory synapses. This is Ephrin type-B receptor 2 (EPHB2) from Coturnix japonica (Japanese quail).